We begin with the raw amino-acid sequence, 753 residues long: Striatin-4 (753 aa).

The tract at residues 10–65 (VAAAASSCRPLGSGAGPGPTGAAPVSAPAPGPGPAGKGGGGGGSPGPTAGPEPLSL) is disordered. The segment covering 43 to 54 (PAGKGGGGGGSP) has biased composition (gly residues). Position 53 is a phosphoserine (Ser-53). Positions 69 to 136 (LHFIQHEWAR…QERAKYHKLK (68 aa)) form a coiled coil. The caveolin-binding stretch occupies residues 71-79 (FIQHEWARF). The tract at residues 165-182 (ENSPLVWKEGRQLLRQYL) is calmodulin-binding. A Phosphoserine modification is found at Ser-206. Disordered regions lie at residues 213–232 (VEPS…LSGG), 271–345 (CEDE…SPHE), and 363–382 (VDGL…QPRP). Composition is skewed to acidic residues over residues 271–283 (CEDE…DELD) and 302–317 (EMED…DAIN). Ser-276 carries the post-translational modification Phosphoserine. Positions 332–345 (PDPRRCTVDGSPHE) are enriched in basic and acidic residues. Residues 370–380 (VTGPPPGTPQP) show a composition bias toward pro residues. 7 WD repeats span residues 436–475 (SHYD…TAKK), 489–528 (AHRG…MDPY), 542–581 (GHGD…PACL), 587–628 (ASEH…ALLT), 635–674 (SGPT…PVHS), 677–716 (AHLD…CVQE), and 723–753 (KHEE…KVFV).

This sequence belongs to the WD repeat striatin family. Part of the core of STRIPAK complexes composed of PP2A catalytic and scaffolding subunits, the striatins (PP2A regulatory subunits), the striatin-associated proteins MOB4, STRIP1 and STRIP2, PDCD10 and members of the STE20 kinases, such as STK24 and STK26. Interacts with CTTNBP2NL.

Its subcellular location is the cytoplasm. In terms of biological role, calmodulin-binding scaffolding protein which is the center of the striatin-interacting phosphatase and kinase (STRIPAK) complexes. STRIPAK complexes have critical roles in protein (de)phosphorylation and are regulators of multiple signaling pathways including Hippo, MAPK, nuclear receptor and cytoskeleton remodeling. Different types of STRIPAK complexes are involved in a variety of biological processes such as cell growth, differentiation, apoptosis, metabolism and immune regulation. Key regulator of the expanded Hippo signaling pathway by interacting and allowing the inhibition of MAP4K kinases by the STRIPAK complex. The polypeptide is Striatin-4 (Homo sapiens (Human)).